The sequence spans 331 residues: Ribose-phosphate pyrophosphokinase (331 aa).

55-57 (DGE) is an ATP binding site. Positions 148 and 187 each coordinate Mg(2+). K211 is a catalytic residue. D-ribose 5-phosphate is bound by residues R213, D237, and 241–245 (DTGGT).

It belongs to the ribose-phosphate pyrophosphokinase family. Class I subfamily. Homohexamer. Mg(2+) is required as a cofactor.

The protein resides in the cytoplasm. The catalysed reaction is D-ribose 5-phosphate + ATP = 5-phospho-alpha-D-ribose 1-diphosphate + AMP + H(+). It functions in the pathway metabolic intermediate biosynthesis; 5-phospho-alpha-D-ribose 1-diphosphate biosynthesis; 5-phospho-alpha-D-ribose 1-diphosphate from D-ribose 5-phosphate (route I): step 1/1. Functionally, involved in the biosynthesis of the central metabolite phospho-alpha-D-ribosyl-1-pyrophosphate (PRPP) via the transfer of pyrophosphoryl group from ATP to 1-hydroxyl of ribose-5-phosphate (Rib-5-P). The polypeptide is Ribose-phosphate pyrophosphokinase (Parasynechococcus marenigrum (strain WH8102)).